A 265-amino-acid polypeptide reads, in one-letter code: Phosphonates import ATP-binding protein PhnC 1 (265 aa).

An ABC transporter domain is found at 3–247 (LRLSAIELRH…HLDTLYANEQ (245 aa)). 36 to 43 (GPSGAGKT) provides a ligand contact to ATP.

Belongs to the ABC transporter superfamily. Phosphonates importer (TC 3.A.1.9.1) family. As to quaternary structure, the complex is composed of two ATP-binding proteins (PhnC), two transmembrane proteins (PhnE) and a solute-binding protein (PhnD).

The protein localises to the cell inner membrane. It carries out the reaction phosphonate(out) + ATP + H2O = phosphonate(in) + ADP + phosphate + H(+). In terms of biological role, part of the ABC transporter complex PhnCDE involved in phosphonates import. Responsible for energy coupling to the transport system. In Pseudomonas syringae pv. syringae (strain B728a), this protein is Phosphonates import ATP-binding protein PhnC 1.